A 94-amino-acid chain; its full sequence is Small ribosomal subunit protein eS24 (94 aa).

It belongs to the eukaryotic ribosomal protein eS24 family.

This is Small ribosomal subunit protein eS24 from Nanoarchaeum equitans (strain Kin4-M).